The sequence spans 104 residues: Large ribosomal subunit protein bL21 (104 aa).

This sequence belongs to the bacterial ribosomal protein bL21 family. As to quaternary structure, part of the 50S ribosomal subunit. Contacts protein L20.

Functionally, this protein binds to 23S rRNA in the presence of protein L20. The chain is Large ribosomal subunit protein bL21 from Streptococcus uberis (strain ATCC BAA-854 / 0140J).